The primary structure comprises 816 residues: Protein EFR3 homolog B (816 aa).

The segment covering 206–219 (SGEGTESRSPSPLQ) has biased composition (polar residues). Residues 206–230 (SGEGTESRSPSPLQASEKEKESPAE) are disordered. Basic and acidic residues predominate over residues 221–230 (SEKEKESPAE).

It belongs to the EFR3 family. Component of a phosphatidylinositol 4-kinase (PI4K) complex. In terms of processing, palmitoylated at its N-terminus, anchoring the protein to the plasma membrane.

The protein resides in the cell membrane. Component of a complex required to localize phosphatidylinositol 4-kinase (PI4K) to the plasma membrane. The complex acts as a regulator of phosphatidylinositol 4-phosphate (PtdIns(4)P) synthesis. In the complex, efr3b probably acts as the membrane-anchoring component. This chain is Protein EFR3 homolog B (efr3b), found in Danio rerio (Zebrafish).